The primary structure comprises 506 residues: Cysteine--tRNA ligase (506 aa).

Cys-34 serves as a coordination point for Zn(2+). A 'HIGH' region motif is present at residues 36 to 46 (PTVYDFAHIGN). Cys-230, His-269, and Glu-273 together coordinate Zn(2+). The 'KMSKS' region motif lies at 302–306 (KMSKS). Residue Lys-305 participates in ATP binding.

The protein belongs to the class-I aminoacyl-tRNA synthetase family. In terms of assembly, monomer. It depends on Zn(2+) as a cofactor.

It is found in the cytoplasm. It catalyses the reaction tRNA(Cys) + L-cysteine + ATP = L-cysteinyl-tRNA(Cys) + AMP + diphosphate. This Brucella suis (strain ATCC 23445 / NCTC 10510) protein is Cysteine--tRNA ligase.